Reading from the N-terminus, the 517-residue chain is GMP synthase [glutamine-hydrolyzing] (517 aa).

The 192-residue stretch at 11–202 (KIIVLDYGSQ…AFDVCHAEAN (192 aa)) folds into the Glutamine amidotransferase type-1 domain. The active-site Nucleophile is Cys88. Active-site residues include His176 and Glu178. A GMPS ATP-PPase domain is found at 203–392 (WSMDDFITKQ…LGMPHSLVWR (190 aa)). 230–236 (SGGVDSS) contacts ATP.

Homodimer.

The enzyme catalyses XMP + L-glutamine + ATP + H2O = GMP + L-glutamate + AMP + diphosphate + 2 H(+). It participates in purine metabolism; GMP biosynthesis; GMP from XMP (L-Gln route): step 1/1. In terms of biological role, catalyzes the synthesis of GMP from XMP. The chain is GMP synthase [glutamine-hydrolyzing] (guaA) from Lacticaseibacillus rhamnosus (Lactobacillus rhamnosus).